Here is a 166-residue protein sequence, read N- to C-terminus: Ribosome maturation factor RimM (166 aa).

The region spanning 92 to 164 (EGVYYDFQLI…KIIIDPIPGL (73 aa)) is the PRC barrel domain.

This sequence belongs to the RimM family. As to quaternary structure, binds ribosomal protein uS19.

It is found in the cytoplasm. Functionally, an accessory protein needed during the final step in the assembly of 30S ribosomal subunit, possibly for assembly of the head region. Essential for efficient processing of 16S rRNA. May be needed both before and after RbfA during the maturation of 16S rRNA. It has affinity for free ribosomal 30S subunits but not for 70S ribosomes. The sequence is that of Ribosome maturation factor RimM from Dehalococcoides mccartyi (strain CBDB1).